A 275-amino-acid chain; its full sequence is 4-hydroxy-tetrahydrodipicolinate reductase (275 aa).

Residue 12 to 17 (GAAGRM) coordinates NAD(+). Arg39 contacts NADP(+). NAD(+)-binding positions include 102-104 (GTT) and 126-129 (SGNM). His160 functions as the Proton donor/acceptor in the catalytic mechanism. Position 161 (His161) interacts with (S)-2,3,4,5-tetrahydrodipicolinate. Lys164 (proton donor) is an active-site residue. 170–171 (GT) is a (S)-2,3,4,5-tetrahydrodipicolinate binding site.

This sequence belongs to the DapB family.

The protein localises to the cytoplasm. It carries out the reaction (S)-2,3,4,5-tetrahydrodipicolinate + NAD(+) + H2O = (2S,4S)-4-hydroxy-2,3,4,5-tetrahydrodipicolinate + NADH + H(+). The enzyme catalyses (S)-2,3,4,5-tetrahydrodipicolinate + NADP(+) + H2O = (2S,4S)-4-hydroxy-2,3,4,5-tetrahydrodipicolinate + NADPH + H(+). It participates in amino-acid biosynthesis; L-lysine biosynthesis via DAP pathway; (S)-tetrahydrodipicolinate from L-aspartate: step 4/4. Catalyzes the conversion of 4-hydroxy-tetrahydrodipicolinate (HTPA) to tetrahydrodipicolinate. The sequence is that of 4-hydroxy-tetrahydrodipicolinate reductase from Agrobacterium fabrum (strain C58 / ATCC 33970) (Agrobacterium tumefaciens (strain C58)).